A 734-amino-acid polypeptide reads, in one-letter code: Platelet glycoprotein Ib alpha chain (734 aa).

An N-terminal signal peptide occupies residues 1–16 (MALLILLFLLPSPLHS). An LRRNT domain is found at 17–47 (QHTCSISKVTSLLEVNCENKKLTALPADLPA). The Extracellular portion of the chain corresponds to 17–612 (QHTCSISKVT…LNSDFCCFLP (596 aa)). C20 and C33 form a disulfide bridge. LRR repeat units lie at residues 48–69 (DTGI…SLVH), 72–93 (HLTY…GKLI), 94–115 (KLEN…GWAL), 117–140 (ALTT…DGLS), 141–162 (QLQE…LLLP), 165–188 (KLKK…DGLE), and 189–210 (DLDT…FFGT). In terms of domain architecture, LRRCT spans 221–282 (NSWYCDCEIL…YSYPGKGCPT (62 aa)). 2 disulfide bridges follow: C225–C264 and C227–C280. Position 292 is a sulfotyrosine (Y292). Residues T301, T311, T315, and T316 are each glycosylated (O-linked (GalNAc...) threonine). A glycan (O-linked (GalNAc...) serine) is linked at S335. O-linked (GalNAc...) threonine glycans are attached at residues T339, T348, T358, and T377. S382 carries an O-linked (GalNAc...) serine glycan. 3 O-linked (GalNAc...) threonine glycosylation sites follow: T384, T385, and T405. Disordered stretches follow at residues 406–429 (STLT…TPEH) and 460–526 (EPST…PEPS). Residues T512, T516, T519, T530, T542, T546, T550, and T562 are each glycosylated (O-linked (GalNAc...) threonine). S572 is a glycosylation site (O-linked (GalNAc...) serine). T573 is a glycosylation site (O-linked (GalNAc...) threonine). A helical membrane pass occupies residues 613 to 633 (LGFYVLGLLWLLFASVVLILL). The Cytoplasmic segment spans residues 634–734 (LTWTWHVTPH…VGIRYSGHSL (101 aa)). A phosphoserine mark is found at S711 and S714.

In terms of assembly, two GP-Ib beta are disulfide-linked to one GP-Ib alpha. GP-IX is complexed with the GP-Ib heterodimer via a non covalent linkage. Interacts with FLNB. Interacts with FLNA (via filamin repeats 4, 9, 12, 17, 19, 21, and 23). In terms of processing, O-glycosylated. Glycocalicin is the product of a proteolytic cleavage/shedding, catalyzed by ADAM17, which releases most of the extracellular domain. Binding sites for vWF and thrombin are in this part of the protein.

The protein resides in the membrane. Functionally, GP-Ib, a surface membrane protein of platelets, participates in the formation of platelet plugs by binding to the A1 domain of vWF, which is already bound to the subendothelium. The chain is Platelet glycoprotein Ib alpha chain (Gp1ba) from Mus musculus (Mouse).